A 525-amino-acid polypeptide reads, in one-letter code: NAD(P)H-quinone oxidoreductase chain 4 1 (525 aa).

A run of 14 helical transmembrane segments spans residues 6–26, 36–56, 91–111, 115–135, 136–156, 169–189, 212–232, 243–263, 277–297, 314–334, 335–355, 375–397, 417–437, and 464–484; these read FPWLTTIILLPIAASLLIPII, WYALIVGLIDFALIVYAFYTS, LIILTGFITTLATLAAWPVTL, LFYFLLLAMYGGQIAVFAVQD, LLLFFLVWELELIPVYLLLAI, FILYTAGGSLFILLAALTMAF, LLLYAGFLIAYAIKLPIIPLH, TAPAHMLLAGILLKMGGYALI, FAPVLVVLGVVNIIYAALTSF, MGFVIIGFASFTDLGLSGAVL, QMVSHGLIGASLFFLVGATYD, IFAMFTACSMASLALPGMSGFVA, VIVVFLMAVGVILTPIYLLSM, and VFVIACLLVPIIGIGFYPKLL.

The protein belongs to the complex I subunit 4 family.

The protein resides in the cellular thylakoid membrane. It carries out the reaction a plastoquinone + NADH + (n+1) H(+)(in) = a plastoquinol + NAD(+) + n H(+)(out). The enzyme catalyses a plastoquinone + NADPH + (n+1) H(+)(in) = a plastoquinol + NADP(+) + n H(+)(out). NDH-1 shuttles electrons from NAD(P)H, via FMN and iron-sulfur (Fe-S) centers, to quinones in the respiratory chain. The immediate electron acceptor for the enzyme in this species is believed to be plastoquinone. Couples the redox reaction to proton translocation (for every two electrons transferred, four hydrogen ions are translocated across the cytoplasmic membrane), and thus conserves the redox energy in a proton gradient. In Trichormus variabilis (strain ATCC 29413 / PCC 7937) (Anabaena variabilis), this protein is NAD(P)H-quinone oxidoreductase chain 4 1.